The following is a 613-amino-acid chain: ATP-dependent zinc metalloprotease FtsH (613 aa).

At 1–4 the chain is on the cytoplasmic side; that stretch reads MVKN. The chain crosses the membrane as a helical span at residues 5–25; it reads LIFWLVITVVLMSVFQNFNSS. Over 26–98 the chain is Extracellular; the sequence is DTSNHRVDYS…VGEIPEEPSL (73 aa). A helical transmembrane segment spans residues 99–119; sequence LISIFISWFPMLLLIGVWIFF. Over 120 to 613 the chain is Cytoplasmic; sequence MRQMQMGGGK…WLEVDQKKDI (494 aa). 192-199 lines the ATP pocket; that stretch reads GPPGTGKT. His-414 contacts Zn(2+). Glu-415 is an active-site residue. Zn(2+) is bound by residues His-418 and Asp-492.

The protein in the central section; belongs to the AAA ATPase family. It in the C-terminal section; belongs to the peptidase M41 family. As to quaternary structure, homohexamer. It depends on Zn(2+) as a cofactor.

It localises to the cell membrane. Its function is as follows. Acts as a processive, ATP-dependent zinc metallopeptidase for both cytoplasmic and membrane proteins. Plays a role in the quality control of integral membrane proteins. The protein is ATP-dependent zinc metalloprotease FtsH of Buchnera aphidicola subsp. Schizaphis graminum (strain Sg).